The following is a 340-amino-acid chain: DNA-directed RNA polymerase subunit alpha (340 aa).

The segment at 1-233 (MIQDEIKVST…DLFIPLINSE (233 aa)) is alpha N-terminal domain (alpha-NTD). The segment at 265–340 (TKDVAFKHIF…IQLPKNKNYL (76 aa)) is alpha C-terminal domain (alpha-CTD).

This sequence belongs to the RNA polymerase alpha chain family. In plastids the minimal PEP RNA polymerase catalytic core is composed of four subunits: alpha, beta, beta', and beta''. When a (nuclear-encoded) sigma factor is associated with the core the holoenzyme is formed, which can initiate transcription.

Its subcellular location is the plastid. It is found in the chloroplast. It catalyses the reaction RNA(n) + a ribonucleoside 5'-triphosphate = RNA(n+1) + diphosphate. Functionally, DNA-dependent RNA polymerase catalyzes the transcription of DNA into RNA using the four ribonucleoside triphosphates as substrates. The polypeptide is DNA-directed RNA polymerase subunit alpha (Marchantia polymorpha (Common liverwort)).